A 103-amino-acid chain; its full sequence is MVYKARISLSGTENKIVDVVCEEIKGIAKRTGVEIHGPIPLPTKRLVVPVRKSPDGEGSPTWDRWEMRVHKRLIDVDADERTLRQLMRISIPDGVRIEIQIKS.

It belongs to the universal ribosomal protein uS10 family. Part of the 30S ribosomal subunit.

Functionally, involved in the binding of tRNA to the ribosomes. The polypeptide is Small ribosomal subunit protein uS10 (Picrophilus torridus (strain ATCC 700027 / DSM 9790 / JCM 10055 / NBRC 100828 / KAW 2/3)).